The chain runs to 298 residues: 4-hydroxy-3-methylbut-2-enyl diphosphate reductase (298 aa).

Residue cysteine 12 coordinates [4Fe-4S] cluster. The (2E)-4-hydroxy-3-methylbut-2-enyl diphosphate site is built by histidine 40 and histidine 78. Dimethylallyl diphosphate-binding residues include histidine 40 and histidine 78. Positions 40 and 78 each coordinate isopentenyl diphosphate. A [4Fe-4S] cluster-binding site is contributed by cysteine 100. Histidine 128 is a binding site for (2E)-4-hydroxy-3-methylbut-2-enyl diphosphate. Histidine 128 lines the dimethylallyl diphosphate pocket. Residue histidine 128 participates in isopentenyl diphosphate binding. Glutamate 130 acts as the Proton donor in catalysis. Threonine 171 is a (2E)-4-hydroxy-3-methylbut-2-enyl diphosphate binding site. Cysteine 200 contacts [4Fe-4S] cluster. Serine 228, serine 229, asparagine 230, and serine 270 together coordinate (2E)-4-hydroxy-3-methylbut-2-enyl diphosphate. Dimethylallyl diphosphate contacts are provided by serine 228, serine 229, asparagine 230, and serine 270. Isopentenyl diphosphate is bound by residues serine 228, serine 229, asparagine 230, and serine 270.

The protein belongs to the IspH family. [4Fe-4S] cluster is required as a cofactor.

The enzyme catalyses isopentenyl diphosphate + 2 oxidized [2Fe-2S]-[ferredoxin] + H2O = (2E)-4-hydroxy-3-methylbut-2-enyl diphosphate + 2 reduced [2Fe-2S]-[ferredoxin] + 2 H(+). It catalyses the reaction dimethylallyl diphosphate + 2 oxidized [2Fe-2S]-[ferredoxin] + H2O = (2E)-4-hydroxy-3-methylbut-2-enyl diphosphate + 2 reduced [2Fe-2S]-[ferredoxin] + 2 H(+). It participates in isoprenoid biosynthesis; dimethylallyl diphosphate biosynthesis; dimethylallyl diphosphate from (2E)-4-hydroxy-3-methylbutenyl diphosphate: step 1/1. It functions in the pathway isoprenoid biosynthesis; isopentenyl diphosphate biosynthesis via DXP pathway; isopentenyl diphosphate from 1-deoxy-D-xylulose 5-phosphate: step 6/6. Catalyzes the conversion of 1-hydroxy-2-methyl-2-(E)-butenyl 4-diphosphate (HMBPP) into a mixture of isopentenyl diphosphate (IPP) and dimethylallyl diphosphate (DMAPP). Acts in the terminal step of the DOXP/MEP pathway for isoprenoid precursor biosynthesis. The polypeptide is 4-hydroxy-3-methylbut-2-enyl diphosphate reductase (Kosmotoga olearia (strain ATCC BAA-1733 / DSM 21960 / TBF 19.5.1)).